The chain runs to 213 residues: StAR-related lipid transfer protein 5 (213 aa).

Positions 1–213 constitute an START domain; it reads MDPALAAQMS…LQKAVKQFHE (213 aa).

May be involved in the intracellular transport of sterols or other lipids. May bind cholesterol or other sterols. This chain is StAR-related lipid transfer protein 5 (STARD5), found in Pongo abelii (Sumatran orangutan).